A 341-amino-acid polypeptide reads, in one-letter code: HTH-type transcriptional repressor PurR (341 aa).

Positions 2-56 (ATIKDVAKRANVSTTTVSHVINKTRFVAEETRNAVWAAIKELHYSPSAVARSLKV) constitute an HTH lacI-type domain. The segment at residues 4-23 (IKDVAKRANVSTTTVSHVIN) is a DNA-binding region (H-T-H motif). Residues 48 to 56 (SAVARSLKV) mediate DNA binding. Residues Tyr-73, Arg-190, Thr-192, Phe-221, and Asp-275 each coordinate hypoxanthine.

In terms of assembly, homodimer.

It participates in purine metabolism; purine nucleotide biosynthesis [regulation]. Functionally, is the main repressor of the genes involved in the de novo synthesis of purine nucleotides, regulating purB, purC, purEK, purF, purHD, purL, purMN and guaBA expression. PurR is allosterically activated to bind its cognate DNA by binding the purine corepressors, hypoxanthine or guanine, thereby effecting transcription repression. This chain is HTH-type transcriptional repressor PurR, found in Klebsiella pneumoniae subsp. pneumoniae (strain ATCC 700721 / MGH 78578).